The primary structure comprises 109 residues: MSEFKRISPEQALALRAEGAVVVDIRDPQAYAAGHITGATHLDNHSVADFIRNADLDAPTLVVCYHGNSSQSAAAYLVGQGFSNVYSIDGGFELWRSTYPGETAQGNAE.

The region spanning Arg16–Ala104 is the Rhodanese domain. Cys64 (cysteine persulfide intermediate) is an active-site residue.

Belongs to the GlpE family.

The protein localises to the cytoplasm. The catalysed reaction is thiosulfate + hydrogen cyanide = thiocyanate + sulfite + 2 H(+). It catalyses the reaction thiosulfate + [thioredoxin]-dithiol = [thioredoxin]-disulfide + hydrogen sulfide + sulfite + 2 H(+). Functionally, transferase that catalyzes the transfer of sulfur from thiosulfate to thiophilic acceptors such as cyanide or dithiols. May function in a CysM-independent thiosulfate assimilation pathway by catalyzing the conversion of thiosulfate to sulfite, which can then be used for L-cysteine biosynthesis. In Pseudomonas entomophila (strain L48), this protein is Thiosulfate sulfurtransferase GlpE.